The following is a 183-amino-acid chain: Ankyrin repeat domain-containing protein 39 (183 aa).

ANK repeat units follow at residues 30-59, 63-92, 96-125, and 129-158; these read DFER…DPSQ, AGYT…KCDA, GGAT…NPRV, and DGMT…ALKA. Residue Ser-153 is modified to Phosphoserine.

The protein belongs to the ANKRD39 family.

The polypeptide is Ankyrin repeat domain-containing protein 39 (ANKRD39) (Homo sapiens (Human)).